We begin with the raw amino-acid sequence, 139 residues long: Superoxide dismutase [Cu-Zn] (139 aa).

The S-palmitoyl cysteine moiety is linked to residue C6. Cu cation contacts are provided by H47 and H49. Zn(2+)-binding residues include H72, H81, and D84. Residue H114 coordinates Cu cation. Over residues 118 to 129 the composition is skewed to basic and acidic residues; that stretch reads DDLGKGGNDESL. Positions 118–139 are disordered; it reads DDLGKGGNDESLKTGNAGGRMA.

Belongs to the Cu-Zn superoxide dismutase family. Homodimer. Requires Cu cation as cofactor. Zn(2+) is required as a cofactor.

It localises to the cytoplasm. It is found in the nucleus. The catalysed reaction is 2 superoxide + 2 H(+) = H2O2 + O2. Functionally, destroys radicals which are normally produced within the cells and which are toxic to biological systems. This is Superoxide dismutase [Cu-Zn] (sod1) from Lampanyctus crocodilus (Jewel lanternfish).